The following is a 360-amino-acid chain: Serine/threonine-protein kinase SRK2H (360 aa).

Positions 4-260 (YEVVKDLGAG…LKEIKKHPWY (257 aa)) constitute a Protein kinase domain. ATP-binding positions include 10 to 18 (LGAGNFGVA) and K33. The active-site Proton acceptor is the D123. The interval 298 to 360 (EARNPAPSSN…AHSCQEPPKA (63 aa)) is disordered. Positions 313 to 343 (DDDEEDVEDEVEEEEEEEEEEEEEEEEEEDE) are enriched in acidic residues. Basic and acidic residues predominate over residues 344–360 (YEKHVKEAHSCQEPPKA).

Belongs to the protein kinase superfamily. Ser/Thr protein kinase family. In terms of tissue distribution, expressed in seedlings.

The catalysed reaction is L-seryl-[protein] + ATP = O-phospho-L-seryl-[protein] + ADP + H(+). The enzyme catalyses L-threonyl-[protein] + ATP = O-phospho-L-threonyl-[protein] + ADP + H(+). The polypeptide is Serine/threonine-protein kinase SRK2H (SRK2H) (Arabidopsis thaliana (Mouse-ear cress)).